A 134-amino-acid polypeptide reads, in one-letter code: Transcription antitermination protein NusB (134 aa).

Belongs to the NusB family.

Functionally, involved in transcription antitermination. Required for transcription of ribosomal RNA (rRNA) genes. Binds specifically to the boxA antiterminator sequence of the ribosomal RNA (rrn) operons. This chain is Transcription antitermination protein NusB, found in Shewanella sp. (strain W3-18-1).